The chain runs to 468 residues: Citrate synthase, mitochondrial (468 aa).

The N-terminal 30 residues, 1-30, are a transit peptide targeting the mitochondrion; it reads MSLISAGRVCARILGAKNSPCALIAARQAS. Active-site residues include His-303 and His-349. Residue Arg-358 coordinates oxaloacetate. The active site involves Asp-404. Oxaloacetate contacts are provided by Arg-430 and Arg-450.

It belongs to the citrate synthase family. As to quaternary structure, homodimer.

It localises to the mitochondrion matrix. The catalysed reaction is oxaloacetate + acetyl-CoA + H2O = citrate + CoA + H(+). The protein operates within carbohydrate metabolism; tricarboxylic acid cycle; isocitrate from oxaloacetate: step 1/2. In terms of biological role, key enzyme of the Krebs tricarboxylic acid cycle which catalyzes the synthesis of citrate from acetyl coenzyme A and oxaloacetate. This is Citrate synthase, mitochondrial (cs) from Xenopus laevis (African clawed frog).